A 291-amino-acid polypeptide reads, in one-letter code: 4-hydroxy-tetrahydrodipicolinate synthase (291 aa).

Residue Thr-45 coordinates pyruvate. Tyr-133 (proton donor/acceptor) is an active-site residue. Catalysis depends on Lys-161, which acts as the Schiff-base intermediate with substrate. Pyruvate is bound at residue Ile-203.

Belongs to the DapA family. Homotetramer; dimer of dimers.

The protein resides in the cytoplasm. It catalyses the reaction L-aspartate 4-semialdehyde + pyruvate = (2S,4S)-4-hydroxy-2,3,4,5-tetrahydrodipicolinate + H2O + H(+). It participates in amino-acid biosynthesis; L-lysine biosynthesis via DAP pathway; (S)-tetrahydrodipicolinate from L-aspartate: step 3/4. In terms of biological role, catalyzes the condensation of (S)-aspartate-beta-semialdehyde [(S)-ASA] and pyruvate to 4-hydroxy-tetrahydrodipicolinate (HTPA). The chain is 4-hydroxy-tetrahydrodipicolinate synthase from Neisseria meningitidis serogroup C (strain 053442).